Reading from the N-terminus, the 211-residue chain is MSRKHLTARQQEIFDFLKHHIDTTGMPPTRVEIAREIGFKSPNAAEEHLKALARKGYIEMLSGTSRGIRILINNDNEDVTQDLSLPLIGKVAAGTPIMAIEHVESHYPVNGAMFNPNADYLLKVNGNSMEKIGILDGDLLAVHKTNFARNGQVVVARVEDEVTVKRLEKKGELIYLHPENDELQPIIVDPRLKYIEIEGIAVGVIRNNAWM.

A DNA-binding region (H-T-H motif) is located at residues 30-50; sequence RVEIAREIGFKSPNAAEEHLK. Active-site for autocatalytic cleavage activity residues include Ser128 and Lys165.

The protein belongs to the peptidase S24 family. In terms of assembly, homodimer.

It carries out the reaction Hydrolysis of Ala-|-Gly bond in repressor LexA.. Functionally, represses a number of genes involved in the response to DNA damage (SOS response), including recA and lexA. In the presence of single-stranded DNA, RecA interacts with LexA causing an autocatalytic cleavage which disrupts the DNA-binding part of LexA, leading to derepression of the SOS regulon and eventually DNA repair. This chain is LexA repressor, found in Haemophilus ducreyi (strain 35000HP / ATCC 700724).